The chain runs to 133 residues: Hydrogenase maturation factor HypA (133 aa).

Histidine 2 serves as a coordination point for Ni(2+). The Zn(2+) site is built by cysteine 73, cysteine 75, cysteine 105, and cysteine 108.

The protein belongs to the HypA/HybF family.

Its function is as follows. Involved in the maturation of [NiFe] hydrogenases. Required for nickel insertion into the metal center of the hydrogenase. The protein is Hydrogenase maturation factor HypA of Methanosarcina barkeri (strain Fusaro / DSM 804).